A 519-amino-acid chain; its full sequence is Keratin, type II cytoskeletal 1b (519 aa).

Residues 1–166 (MSRQFSSQSA…DPEIQKIKTQ (166 aa)) form a head region. Omega-N-methylarginine occurs at positions 81 and 95. The segment at 167 to 202 (EREQIKTLNNKFASFIDKVRFLEQQNQVLQTKWELL) is coil 1A. Residues 167–480 (EREQIKTLNN…ELLEGEESRM (314 aa)) form the IF rod domain. Residues 203-221 (QQVNTSTRTSSLEPIFEEF) form a linker 1 region. The interval 222–313 (INQLQRQVDV…YLFDTELSQI (92 aa)) is coil 1B. The segment at 314-337 (QTHVSDTNVILSMDNNRSLDLDSI) is linker 12. The interval 338-476 (INAVRTQYEL…ATYRELLEGE (139 aa)) is coil 2. Positions 477–519 (ESRMSGALQSQVSIWALPSNEGNDLGERLHDPQSQVPVPKLGC) are tail. The tract at residues 499–519 (NDLGERLHDPQSQVPVPKLGC) is disordered.

This sequence belongs to the intermediate filament family. Undergoes deimination of some arginine residues (citrullination).

This chain is Keratin, type II cytoskeletal 1b (Krt77), found in Rattus norvegicus (Rat).